Consider the following 198-residue polypeptide: A-type ATP synthase subunit E (198 aa).

It belongs to the V-ATPase E subunit family. In terms of assembly, has multiple subunits with at least A(3), B(3), C, D, E, F, H, I and proteolipid K(x).

The protein localises to the cell membrane. Its function is as follows. Component of the A-type ATP synthase that produces ATP from ADP in the presence of a proton gradient across the membrane. The sequence is that of A-type ATP synthase subunit E from Pyrococcus furiosus (strain ATCC 43587 / DSM 3638 / JCM 8422 / Vc1).